We begin with the raw amino-acid sequence, 686 residues long: DNA ligase (686 aa).

NAD(+)-binding positions include 31–35, 80–81, and E109; these read DSEYD and SL. K111 (N6-AMP-lysine intermediate) is an active-site residue. Residues R132, E166, K280, and K304 each coordinate NAD(+). Zn(2+)-binding residues include C430, C433, C448, and C453. A BRCT domain is found at 611-686; sequence NVEGILSGKT…IWSEQDLLDL (76 aa).

Belongs to the NAD-dependent DNA ligase family. LigA subfamily. Mg(2+) serves as cofactor. Requires Mn(2+) as cofactor.

The enzyme catalyses NAD(+) + (deoxyribonucleotide)n-3'-hydroxyl + 5'-phospho-(deoxyribonucleotide)m = (deoxyribonucleotide)n+m + AMP + beta-nicotinamide D-nucleotide.. DNA ligase that catalyzes the formation of phosphodiester linkages between 5'-phosphoryl and 3'-hydroxyl groups in double-stranded DNA using NAD as a coenzyme and as the energy source for the reaction. It is essential for DNA replication and repair of damaged DNA. The sequence is that of DNA ligase from Lactococcus lactis subsp. cremoris (strain SK11).